The sequence spans 402 residues: Formate-dependent phosphoribosylglycinamide formyltransferase (402 aa).

N(1)-(5-phospho-beta-D-ribosyl)glycinamide is bound by residues 25–26 (EL) and E85. Residues R118, K159, 164 to 169 (SSGKGQ), 199 to 202 (EQFV), and E207 each bind ATP. The 196-residue stretch at 123–318 (RLASEELGLP…EFELHAKAVL (196 aa)) folds into the ATP-grasp domain. The Mg(2+) site is built by E277 and E289. N(1)-(5-phospho-beta-D-ribosyl)glycinamide is bound by residues D296, K365, and 372-373 (RR).

It belongs to the PurK/PurT family. Homodimer.

The catalysed reaction is N(1)-(5-phospho-beta-D-ribosyl)glycinamide + formate + ATP = N(2)-formyl-N(1)-(5-phospho-beta-D-ribosyl)glycinamide + ADP + phosphate + H(+). Its pathway is purine metabolism; IMP biosynthesis via de novo pathway; N(2)-formyl-N(1)-(5-phospho-D-ribosyl)glycinamide from N(1)-(5-phospho-D-ribosyl)glycinamide (formate route): step 1/1. Involved in the de novo purine biosynthesis. Catalyzes the transfer of formate to 5-phospho-ribosyl-glycinamide (GAR), producing 5-phospho-ribosyl-N-formylglycinamide (FGAR). Formate is provided by PurU via hydrolysis of 10-formyl-tetrahydrofolate. The chain is Formate-dependent phosphoribosylglycinamide formyltransferase from Corynebacterium efficiens (strain DSM 44549 / YS-314 / AJ 12310 / JCM 11189 / NBRC 100395).